The following is a 352-amino-acid chain: tRNA (guanine(26)-N(2))-dimethyltransferase (352 aa).

One can recognise a Trm1 methyltransferase domain in the interval 4–350 (ILNKEGAVEF…ANYDEIARIL (347 aa)). 5 residues coordinate S-adenosyl-L-methionine: Arg39, Arg65, Asp83, Asp109, and Ala110.

The protein belongs to the class I-like SAM-binding methyltransferase superfamily. Trm1 family.

The enzyme catalyses guanosine(26) in tRNA + 2 S-adenosyl-L-methionine = N(2)-dimethylguanosine(26) in tRNA + 2 S-adenosyl-L-homocysteine + 2 H(+). Functionally, dimethylates a single guanine residue at position 26 of a number of tRNAs using S-adenosyl-L-methionine as donor of the methyl groups. In Pyrobaculum islandicum (strain DSM 4184 / JCM 9189 / GEO3), this protein is tRNA (guanine(26)-N(2))-dimethyltransferase.